A 539-amino-acid polypeptide reads, in one-letter code: Chaperonin GroEL (539 aa).

Residues T29–P32, D86–T90, G413, D477–L479, and D493 contribute to the ATP site.

Belongs to the chaperonin (HSP60) family. As to quaternary structure, forms a cylinder of 14 subunits composed of two heptameric rings stacked back-to-back. Interacts with the co-chaperonin GroES.

It localises to the cytoplasm. The catalysed reaction is ATP + H2O + a folded polypeptide = ADP + phosphate + an unfolded polypeptide.. In terms of biological role, together with its co-chaperonin GroES, plays an essential role in assisting protein folding. The GroEL-GroES system forms a nano-cage that allows encapsulation of the non-native substrate proteins and provides a physical environment optimized to promote and accelerate protein folding. In Clostridium perfringens (strain ATCC 13124 / DSM 756 / JCM 1290 / NCIMB 6125 / NCTC 8237 / Type A), this protein is Chaperonin GroEL.